The primary structure comprises 158 residues: 2-C-methyl-D-erythritol 2,4-cyclodiphosphate synthase (158 aa).

Residues Asp9 and His11 each coordinate a divalent metal cation. 4-CDP-2-C-methyl-D-erythritol 2-phosphate-binding positions include 9-11 (DVH) and 35-36 (HS). His43 lines the a divalent metal cation pocket. Residues 57 to 59 (DIG), 62 to 66 (FPDTD), 101 to 107 (AQAPKMA), 133 to 136 (TTTE), Phe140, and Arg143 contribute to the 4-CDP-2-C-methyl-D-erythritol 2-phosphate site.

This sequence belongs to the IspF family. Homotrimer. The cofactor is a divalent metal cation.

It catalyses the reaction 4-CDP-2-C-methyl-D-erythritol 2-phosphate = 2-C-methyl-D-erythritol 2,4-cyclic diphosphate + CMP. The protein operates within isoprenoid biosynthesis; isopentenyl diphosphate biosynthesis via DXP pathway; isopentenyl diphosphate from 1-deoxy-D-xylulose 5-phosphate: step 4/6. Its function is as follows. Involved in the biosynthesis of isopentenyl diphosphate (IPP) and dimethylallyl diphosphate (DMAPP), two major building blocks of isoprenoid compounds. Catalyzes the conversion of 4-diphosphocytidyl-2-C-methyl-D-erythritol 2-phosphate (CDP-ME2P) to 2-C-methyl-D-erythritol 2,4-cyclodiphosphate (ME-CPP) with a corresponding release of cytidine 5-monophosphate (CMP). The polypeptide is 2-C-methyl-D-erythritol 2,4-cyclodiphosphate synthase (Vibrio vulnificus (strain YJ016)).